The sequence spans 308 residues: GTPase Era (308 aa).

The Era-type G domain maps to 14 to 181 (RCGFVALIGA…RRALAAAMPE (168 aa)). Residues 22-29 (GAPNVGKS) are G1. GTP is bound at residue 22–29 (GAPNVGKS). Residues 48 to 52 (QTTRA) are G2. The segment at 69–72 (DTPG) is G3. GTP is bound by residues 69-73 (DTPGI) and 131-134 (NKID). Positions 131–134 (NKID) are G4. The interval 160 to 162 (VAA) is G5. The region spanning 212-289 (LHQELPYQST…HLFLFVKVRD (78 aa)) is the KH type-2 domain.

Belongs to the TRAFAC class TrmE-Era-EngA-EngB-Septin-like GTPase superfamily. Era GTPase family. As to quaternary structure, monomer.

It localises to the cytoplasm. The protein localises to the cell inner membrane. Its function is as follows. An essential GTPase that binds both GDP and GTP, with rapid nucleotide exchange. Plays a role in 16S rRNA processing and 30S ribosomal subunit biogenesis and possibly also in cell cycle regulation and energy metabolism. The chain is GTPase Era from Afipia carboxidovorans (strain ATCC 49405 / DSM 1227 / KCTC 32145 / OM5) (Oligotropha carboxidovorans).